A 568-amino-acid chain; its full sequence is Sesquiterpene synthase 14 (568 aa).

Mg(2+) is bound by residues aspartate 319, aspartate 323, aspartate 463, and glutamate 471. A DDXXD motif motif is present at residues 319-323 (DDLYD).

The protein belongs to the terpene synthase family. Tpsa subfamily. Mg(2+) serves as cofactor. It depends on Mn(2+) as a cofactor. Mostly expressed in roots, to a lower extent in flowers and, at low levels, in fruits.

It catalyses the reaction (2Z,6Z)-farnesyl diphosphate = (E)-alpha-bisabolene + diphosphate. It carries out the reaction (2Z,6Z)-farnesyl diphosphate = beta-bisabolene + diphosphate. The catalysed reaction is (2E,6E)-farnesyl diphosphate = beta-bisabolene + diphosphate. The enzyme catalyses (2E,6E)-farnesyl diphosphate = (Z)-gamma-bisabolene + diphosphate. It catalyses the reaction (2E,6E)-farnesyl diphosphate = (E)-gamma-bisabolene + diphosphate. It carries out the reaction (2Z,6Z)-farnesyl diphosphate = (E)-gamma-bisabolene + diphosphate. It functions in the pathway secondary metabolite biosynthesis; terpenoid biosynthesis. In terms of biological role, sesquiterpene synthase involved in the biosynthesis of volatile compounds. Mediates the conversion of (2E,6E)-farnesyl diphosphate ((EE)-FPP) into beta-bisabolene, and of (2Z,6Z)-farnesyl diphosphate ((ZZ)-FPP) into alpha-bisabolene, but also smaller amounts of (Z)-gamma-bisabolene, (E)-gamma-bisabolene and nerolidol. The chain is Sesquiterpene synthase 14 from Solanum lycopersicum (Tomato).